Consider the following 172-residue polypeptide: MARKPGRMYKKFSGPAYTRREYMGGVPGVKVAQFDMGNLTEELPIAVTLVVNETCQIRHDALEAARISANRYLLNDVGKTNYRFKVRVYPHQVLRENKQATGAGADRVSDGMRRAFGKAVGTAARVYEGQGVFTIWVNRANFEKAKEAMRRAGHKLPTPYRVVVEKGAELVK.

It belongs to the universal ribosomal protein uL16 family.

The chain is Large ribosomal subunit protein uL16 from Methanocella arvoryzae (strain DSM 22066 / NBRC 105507 / MRE50).